We begin with the raw amino-acid sequence, 74 residues long: Translation initiation factor IF-1 2 (74 aa).

Positions 1-73 (MTKNKNVIEV…TRGRIVFRYR (73 aa)) constitute an S1-like domain.

It belongs to the IF-1 family. As to quaternary structure, component of the 30S ribosomal translation pre-initiation complex which assembles on the 30S ribosome in the order IF-2 and IF-3, IF-1 and N-formylmethionyl-tRNA(fMet); mRNA recruitment can occur at any time during PIC assembly.

The protein localises to the cytoplasm. One of the essential components for the initiation of protein synthesis. Stabilizes the binding of IF-2 and IF-3 on the 30S subunit to which N-formylmethionyl-tRNA(fMet) subsequently binds. Helps modulate mRNA selection, yielding the 30S pre-initiation complex (PIC). Upon addition of the 50S ribosomal subunit IF-1, IF-2 and IF-3 are released leaving the mature 70S translation initiation complex. This is Translation initiation factor IF-1 2 from Streptomyces avermitilis (strain ATCC 31267 / DSM 46492 / JCM 5070 / NBRC 14893 / NCIMB 12804 / NRRL 8165 / MA-4680).